A 230-amino-acid polypeptide reads, in one-letter code: GTP cyclohydrolase III (230 aa).

The protein belongs to the archaeal-type GTP cyclohydrolase family.

The enzyme catalyses GTP + 3 H2O = 2-amino-5-formylamino-6-(5-phospho-D-ribosylamino)pyrimidin-4(3H)-one + 2 phosphate + 2 H(+). In terms of biological role, catalyzes the formation of 2-amino-5-formylamino-6-ribofuranosylamino-4(3H)-pyrimidinone ribonucleotide monophosphate and inorganic phosphate from GTP. Also has an independent pyrophosphate phosphohydrolase activity. This is GTP cyclohydrolase III from Saccharolobus islandicus (strain M.16.27) (Sulfolobus islandicus).